A 2339-amino-acid chain; its full sequence is Inverse autotransporter adhesin YeeJ (2339 aa).

A signal peptide spans 1 to 26 (MGIKLRRLTAGICLITQLAFPMAAAA). In terms of domain architecture, LysM spans 50-98 (VPYTLGALESAQSVAERFGISVAELRKLNQFRTFARGFDNVRQGDELDV). Residues 125–400 (TSQQIGSLLA…SRYDLVDRNN (276 aa)) form an inverse autotransporter region. The invasin 3 domain stretch occupies residues 513–605 (QKDSSVSLST…GVDAAKAPAV (93 aa)). Big-1 domains lie at 721–815 (IATL…VSFV), 822–913 (QVDL…VNFI), 920–1017 (ALTL…MTFV), 1024–1121 (VVVL…VTFV), 1128–1221 (QVVL…VHFI), 1229–1331 (IIEL…SINV), 1339–1432 (HLTL…VTYV), 1439–1535 (EITL…VNFI), 1542–1639 (QVNL…VTLI), 1646–1730 (KLAS…PTEV), 1746–1837 (ITSL…LEAI), 1840–1934 (KLTL…VKVT), and 1942–2034 (VASF…ITLV). Residues 2236–2339 (KSWWVNAGEA…FAYATCYKNL (104 aa)) form a C-type lectin domain region.

The protein belongs to the intimin/invasin family.

The protein localises to the cell outer membrane. A cryptic inverse autotransporter, it is not expressed in wild-type strain MG1655. Upon overexpression shows increased adherence to polyvinyl chloride (PVC) plates and increased mature biofilm formation. Probably binds peptidoglycan. This chain is Inverse autotransporter adhesin YeeJ (yeeJ), found in Escherichia coli (strain K12).